Reading from the N-terminus, the 224-residue chain is Jacalin-related lectin 24 (224 aa).

The region spanning 8–160 (MFKVGPIGSK…LTSIGIYVYP (153 aa)) is the Jacalin-type lectin domain.

The protein belongs to the jacalin lectin family.

The chain is Jacalin-related lectin 24 (JAL24) from Arabidopsis thaliana (Mouse-ear cress).